The primary structure comprises 876 residues: DNA polymerase 1 (876 aa).

This sequence belongs to the DNA polymerase type-B family.

The catalysed reaction is DNA(n) + a 2'-deoxyribonucleoside 5'-triphosphate = DNA(n+1) + diphosphate. This polymerase possesses two enzymatic activities: DNA synthesis (polymerase) and an exonucleolytic activity that degrades single-stranded DNA in the 3'- to 5'-direction. In Sulfolobus acidocaldarius (strain ATCC 33909 / DSM 639 / JCM 8929 / NBRC 15157 / NCIMB 11770), this protein is DNA polymerase 1 (dpo1).